Consider the following 115-residue polypeptide: NADH-ubiquinone oxidoreductase chain 3 (115 aa).

Transmembrane regions (helical) follow at residues 4–24, 55–75, and 86–106; these read LVTMLINTTLSFVLILIAFWL, FFLVAITFLLFDLEIALLLPM, and TMTLTAFILLSVLALGLAYEW.

It belongs to the complex I subunit 3 family. As to quaternary structure, core subunit of respiratory chain NADH dehydrogenase (Complex I) which is composed of 45 different subunits. Interacts with TMEM186. Interacts with TMEM242.

The protein localises to the mitochondrion inner membrane. The enzyme catalyses a ubiquinone + NADH + 5 H(+)(in) = a ubiquinol + NAD(+) + 4 H(+)(out). Its function is as follows. Core subunit of the mitochondrial membrane respiratory chain NADH dehydrogenase (Complex I) which catalyzes electron transfer from NADH through the respiratory chain, using ubiquinone as an electron acceptor. Essential for the catalytic activity of complex I. The polypeptide is NADH-ubiquinone oxidoreductase chain 3 (Nelsonia neotomodon (Diminutive woodrat)).